A 354-amino-acid polypeptide reads, in one-letter code: MKVAILGAGCYRTHAASGITNFSRASQVAKEAGIPEIAMTHSTITMGAELLHLIPEITEVVVSDPCFAEEPGMVVLDQFDYKAVMEAHLAGDAEKVMPEIREAVKAKAKETPKPPKGCIHFVHPETVGLKVTASDVEAVKDADIVITWLPKGGSQPAIIEKFASEIKKGAIVTHACTIPTPKFAKIFKDLGRDDLNIIAYHPGAVPEMKGQAFLSEGLADAEKVEEFYCMAKTARGEAFKMPANLISPVCDMGSAVTAPVYAAILAYRDAVTQILGAPADFAQMMADEAISQILDLMRNEGIKNMEDKLNPKALTGTADSMCFGPLADILPASLKVLEKHANENKCECGCSIKP.

Belongs to the HMD family.

It carries out the reaction 5,10-methenyl-5,6,7,8-tetrahydromethanopterin + H2 = 5,10-methylenetetrahydromethanopterin + H(+). Its pathway is one-carbon metabolism; methanogenesis from CO(2); 5,10-methylene-5,6,7,8-tetrahydromethanopterin from 5,10-methenyl-5,6,7,8-tetrahydromethanopterin (hydrogen route): step 1/1. In terms of biological role, catalyzes the reversible reduction of methenyl-H(4)MPT(+) to methylene-H(4)MPT. This is 5,10-methenyltetrahydromethanopterin hydrogenase from Methanococcus maripaludis (strain DSM 14266 / JCM 13030 / NBRC 101832 / S2 / LL).